We begin with the raw amino-acid sequence, 391 residues long: Small ribosomal subunit protein bS1 (391 aa).

S1 motif domains lie at 16–90 (GDKV…LSRR), 108–173 (NEII…LSRK), 194–262 (GDVI…LSIK), and 279–348 (NDDI…LSIK). Residues 356-381 (VVESDPSTTKAYLESEEEDNPTIGDM) form a disordered region.

The protein belongs to the bacterial ribosomal protein bS1 family.

Its function is as follows. Binds mRNA; thus facilitating recognition of the initiation point. It is needed to translate mRNA with a short Shine-Dalgarno (SD) purine-rich sequence. The chain is Small ribosomal subunit protein bS1 (rpsA) from Staphylococcus aureus (strain MRSA252).